A 248-amino-acid polypeptide reads, in one-letter code: Pulmonary surfactant-associated protein A (248 aa).

The first 20 residues, 1-20 (MSLCSLAFTLFLTVVAGIKC), serve as a signal peptide directing secretion. One can recognise a Collagen-like domain in the interval 28-100 (GSPGIPGAPG…PGERGLPGFP (73 aa)). 4-hydroxyproline occurs at positions 30, 33, 36, 42, 54, 57, 63, 67, 70, and 76. Residues 31–99 (GIPGAPGNHG…EPGERGLPGF (69 aa)) are disordered. Residues 42-51 (PGRDGRDGVK) show a composition bias toward basic and acidic residues. Over residues 54 to 65 (PGPPGPMGPPGG) the composition is skewed to pro residues. The segment covering 69–82 (LPGRDGLPGAPGAP) has biased composition (low complexity). Positions 84–93 (ERGDKGEPGE) are enriched in basic and acidic residues. The C-type lectin domain occupies 133 to 248 (SVGDKVFSTN…LQYRLAVCEF (116 aa)). Cystine bridges form between Cys155-Cys246 and Cys224-Cys238. Asn207 is a glycosylation site (N-linked (GlcNAc...) asparagine). Residues Glu215, Arg217, Asn234, and Asp235 each contribute to the Ca(2+) site.

The protein belongs to the SFTPA family. Oligomeric complex of 6 set of homotrimers.

Its subcellular location is the secreted. It is found in the extracellular space. The protein localises to the extracellular matrix. The protein resides in the surface film. Functionally, in presence of calcium ions, it binds to surfactant phospholipids and contributes to lower the surface tension at the air-liquid interface in the alveoli of the mammalian lung and is essential for normal respiration. Enhances the expression of MYO18A/SP-R210 on alveolar macrophages. The protein is Pulmonary surfactant-associated protein A (Sftpa1) of Rattus norvegicus (Rat).